Reading from the N-terminus, the 143-residue chain is Regulator of ribonuclease activity B (143 aa).

Positions 117-135 (DPDAEYDDEDGENEDDESE) are enriched in acidic residues. Positions 117–143 (DPDAEYDDEDGENEDDESESDKSSRLH) are disordered.

This sequence belongs to the RraB family. Interacts with the C-terminal region of Rne.

Its subcellular location is the cytoplasm. Its function is as follows. Globally modulates RNA abundance by binding to RNase E (Rne) and regulating its endonucleolytic activity. Can modulate Rne action in a substrate-dependent manner by altering the composition of the degradosome. In Proteus mirabilis (strain HI4320), this protein is Regulator of ribonuclease activity B.